We begin with the raw amino-acid sequence, 177 residues long: Large ribosomal subunit protein uL22 (177 aa).

Residues 118 to 177 (VESRPSREGRRGGAGESAGGARARRAQGSKAAAAKKAPASSSTKAATTTEASEEAKGGSQ) are disordered. The segment covering 121-130 (RPSREGRRGG) has biased composition (basic and acidic residues). A compositionally biased stretch (low complexity) spans 145–167 (GSKAAAAKKAPASSSTKAATTTE).

This sequence belongs to the universal ribosomal protein uL22 family. As to quaternary structure, part of the 50S ribosomal subunit.

This protein binds specifically to 23S rRNA; its binding is stimulated by other ribosomal proteins, e.g. L4, L17, and L20. It is important during the early stages of 50S assembly. It makes multiple contacts with different domains of the 23S rRNA in the assembled 50S subunit and ribosome. Its function is as follows. The globular domain of the protein is located near the polypeptide exit tunnel on the outside of the subunit, while an extended beta-hairpin is found that lines the wall of the exit tunnel in the center of the 70S ribosome. The polypeptide is Large ribosomal subunit protein uL22 (Mycobacterium sp. (strain JLS)).